The following is a 133-amino-acid chain: Fatty acid-binding protein, heart (133 aa).

An N-acetylvaline modification is found at Val-2. Thr-8 is subject to Phosphothreonine. Tyr-20 is modified (phosphotyrosine; by Tyr-kinases). Ser-23 is modified (phosphoserine). Thr-30 carries the phosphothreonine modification. Ser-83 carries the phosphoserine modification. 127–129 (RTY) is a (9Z)-octadecenoate binding site. 127–129 (RTY) contacts hexadecanoate. 127-129 (RTY) is an octadecanoate binding site.

It belongs to the calycin superfamily. Fatty-acid binding protein (FABP) family.

The protein resides in the cytoplasm. FABPs are thought to play a role in the intracellular transport of long-chain fatty acids and their acyl-CoA esters. This Bos mutus grunniens (Wild yak) protein is Fatty acid-binding protein, heart (FABP3).